An 87-amino-acid chain; its full sequence is MHPLVDELTLSRYLTHGTSVLSSSLYSVAFFLFFFPNFLFFCSCPNHKWVSLPFIGMDILEALCFYREGKIRNIFEIGGLLLQSFYN.

Residues 21–41 (LSSSLYSVAFFLFFFPNFLFF) form a helical membrane-spanning segment.

Its subcellular location is the membrane. This is an uncharacterized protein from Saccharomyces cerevisiae (strain ATCC 204508 / S288c) (Baker's yeast).